The following is a 191-amino-acid chain: Chromobox protein homolog 5 (191 aa).

Phosphoserine occurs at positions 11, 12, 13, and 14. Positions 20-78 (YVVEKVLDRRVVKGQVEYLLKWKGFSEEHNTWEPEKNLDCPELISEFMKKYKKMKEGEN) constitute a Chromo 1 domain. Residue Lys32 forms a Glycyl lysine isopeptide (Lys-Gly) (interchain with G-Cter in SUMO2) linkage. Lys40 is modified (N6-acetyllysine). Residues 70–117 (YKKMKEGENNKPREKSESNKRKSNFSNSADDIKSKKKREQSNDIARGF) are disordered. The segment covering 73–89 (MKEGENNKPREKSESNK) has biased composition (basic and acidic residues). Lys91 is covalently cross-linked (Glycyl lysine isopeptide (Lys-Gly) (interchain with G-Cter in SUMO2)). Phosphoserine occurs at positions 92, 95, and 97. Glycyl lysine isopeptide (Lys-Gly) (interchain with G-Cter in SUMO2) cross-links involve residues Lys102, Lys106, Lys154, and Lys184. A Chromo 2; shadow subtype domain is found at 121-179 (LEPEKIIGATDSCGDLMFLMKWKDTDEADLVLAKEANVKCPQIVIAFYEERLTWHAYPE).

As to quaternary structure, homodimer. Interacts with histone H3 methylated at 'Lys-9'. Interacts (via Chromo 2; shadow subtype domain) with the MIS12 complex subunit NSL1; the interaction is direct, involves dimeric CBX5, and occurs during interphase. Interacts with POGZ; POGZ and PXVXL motif-containing proteins such as INCENP and TRIM28 compete for interaction with CBX5. Interacts with LRIF1 (via PxVxL motif). Interacts with INCENP. Interacts with TRIM24. Interacts (via the chromoshadow domain) with ATRX; the interaction is direct. Interacts (via the chromoshadow domain) with CHAF1A; the interaction is direct. Interacts (via the chromoshadow domain) with LBR; the interaction is direct. Interacts (via the chromoshadow domain) with NIPBL; the interaction is direct. Interacts (via the chromoshadow domain) with SP100; the interaction is direct. Interacts (via the chromoshadow domain) with STAM2; the interaction is direct. Interacts (via the chromoshadow domain) with TRIM28; the interaction is direct. Interacts (via the chromoshadow domain) with CBX3; the interaction is direct. Interacts with PRR14 (via N-terminus). Interacts with RRP1B. Interacts with HNRNPU (via C-terminus); this interaction is, at least in part, RNA-dependent. Interacts with ZNF263; recruited to the SIX3 promoter along with other proteins involved in chromatin modification and transcriptional corepression where it contributes to transcriptional repression. Interacts with AURKB during mitosis. Interacts with CHAMP1. Interacts with BAHD1. Interacts with HP1BP3. Interacts with CHD3. Interacts with CHD4. Interacts with SMYD5. Interacts with KMT5B. Interacts with KMT5C. (Microbial infection) Interacts with JC virus agnoprotein; this interaction induces the dissociation of CBX5 from LBR, resulting in destabilization of the nuclear envelope. Post-translationally, phosphorylation of HP1 and LBR may be responsible for some of the alterations in chromatin organization and nuclear structure which occur at various times during the cell cycle. Phosphorylated during interphase and possibly hyper-phosphorylated during mitosis. In terms of processing, ubiquitinated.

The protein localises to the nucleus. The protein resides in the chromosome. It localises to the centromere. In terms of biological role, component of heterochromatin that recognizes and binds histone H3 tails methylated at 'Lys-9' (H3K9me), leading to epigenetic repression. In contrast, it is excluded from chromatin when 'Tyr-41' of histone H3 is phosphorylated (H3Y41ph). May contribute to the association of heterochromatin with the inner nuclear membrane by interactions with the lamin-B receptor (LBR). Involved in the formation of kinetochore through interaction with the MIS12 complex subunit NSL1. Required for the formation of the inner centromere. The chain is Chromobox protein homolog 5 (CBX5) from Homo sapiens (Human).